Consider the following 306-residue polypeptide: Probable C-terminal domain small phosphatase (306 aa).

The span at 1 to 36 (MNSSPITQVSNPNDSLNHSSTNLIPSSHNSLNNYPQ) shows a compositional bias: polar residues. Disordered regions lie at residues 1 to 45 (MNSS…NRKK) and 61 to 116 (NDQN…NKDS). Low complexity predominate over residues 61-111 (NDQNNGNNINTDNGASNNDKLQQQKQYNQQQQQQYNQHQQQQQQQQQQQQY). The FCP1 homology domain maps to 132–290 (RHVGLKTLVL…LDLLPLLDDL (159 aa)). Asp-142 serves as the catalytic 4-aspartylphosphate intermediate. Asp-142, Asp-144, and Asn-253 together coordinate Mg(2+). The active-site Proton donor is the Asp-144.

In terms of assembly, monomer. Requires Mg(2+) as cofactor.

The protein localises to the nucleus. It carries out the reaction O-phospho-L-seryl-[protein] + H2O = L-seryl-[protein] + phosphate. The enzyme catalyses O-phospho-L-threonyl-[protein] + H2O = L-threonyl-[protein] + phosphate. May function as a phosphatase involved in the regulation of cell growth and differentiation. The chain is Probable C-terminal domain small phosphatase (fcpA) from Dictyostelium discoideum (Social amoeba).